Here is a 100-residue protein sequence, read N- to C-terminus: NADH-quinone oxidoreductase subunit K (100 aa).

Helical transmembrane passes span 4-24 (LFHGLFLSLILFILGLTSLIV), 28-48 (ILFILISLEIMMNAVGLALIV), and 60-80 (IMYIFVITLAASEASIALALL).

It belongs to the complex I subunit 4L family. In terms of assembly, NDH-1 is composed of 13 different subunits. Subunits NuoA, H, J, K, L, M, N constitute the membrane sector of the complex.

Its subcellular location is the cell membrane. The enzyme catalyses a quinone + NADH + 5 H(+)(in) = a quinol + NAD(+) + 4 H(+)(out). In terms of biological role, NDH-1 shuttles electrons from NADH, via FMN and iron-sulfur (Fe-S) centers, to quinones in the respiratory chain. The immediate electron acceptor for the enzyme in this species is believed to be ubiquinone. Couples the redox reaction to proton translocation (for every two electrons transferred, four hydrogen ions are translocated across the cytoplasmic membrane), and thus conserves the redox energy in a proton gradient. The polypeptide is NADH-quinone oxidoreductase subunit K (Buchnera aphidicola subsp. Acyrthosiphon pisum (strain 5A)).